The following is a 172-amino-acid chain: Large ribosomal subunit protein uL10 (172 aa).

This sequence belongs to the universal ribosomal protein uL10 family. Part of the ribosomal stalk of the 50S ribosomal subunit. The N-terminus interacts with L11 and the large rRNA to form the base of the stalk. The C-terminus forms an elongated spine to which L12 dimers bind in a sequential fashion forming a multimeric L10(L12)X complex.

Its function is as follows. Forms part of the ribosomal stalk, playing a central role in the interaction of the ribosome with GTP-bound translation factors. The polypeptide is Large ribosomal subunit protein uL10 (rplJ) (Liberibacter africanus (Citrus greening disease)).